Here is a 430-residue protein sequence, read N- to C-terminus: Phosphomethylpyrimidine synthase (430 aa).

Substrate is bound by residues asparagine 67, methionine 96, tyrosine 125, histidine 161, 183–185 (SRG), 224–227 (DALR), and glutamate 263. Zn(2+) is bound at residue histidine 267. Tyrosine 290 is a substrate binding site. Residue histidine 331 coordinates Zn(2+). Residues cysteine 406, cysteine 409, and cysteine 413 each contribute to the [4Fe-4S] cluster site.

This sequence belongs to the ThiC family. As to quaternary structure, homodimer. It depends on [4Fe-4S] cluster as a cofactor.

It carries out the reaction 5-amino-1-(5-phospho-beta-D-ribosyl)imidazole + S-adenosyl-L-methionine = 4-amino-2-methyl-5-(phosphooxymethyl)pyrimidine + CO + 5'-deoxyadenosine + formate + L-methionine + 3 H(+). It functions in the pathway cofactor biosynthesis; thiamine diphosphate biosynthesis. Its function is as follows. Catalyzes the synthesis of the hydroxymethylpyrimidine phosphate (HMP-P) moiety of thiamine from aminoimidazole ribotide (AIR) in a radical S-adenosyl-L-methionine (SAM)-dependent reaction. In Campylobacter jejuni subsp. jejuni serotype O:6 (strain 81116 / NCTC 11828), this protein is Phosphomethylpyrimidine synthase.